The primary structure comprises 259 residues: Probable metal transport system ATP-binding protein CPn_0348/CP_0412/CPj0348/CpB0355 (259 aa).

Residues 3 to 241 (VKDETFWSVH…TIFQTYGCEI (239 aa)) enclose the ABC transporter domain. Residue 41–48 (GPNGAGKS) participates in ATP binding.

This sequence belongs to the ABC transporter superfamily.

Its subcellular location is the cell inner membrane. Part of an ATP-driven transport system CPn0346/CPn0347/CPn0348/CPn0349 for a metal. Probably responsible for energy coupling to the transport system. The protein is Probable metal transport system ATP-binding protein CPn_0348/CP_0412/CPj0348/CpB0355 of Chlamydia pneumoniae (Chlamydophila pneumoniae).